Here is a 231-residue protein sequence, read N- to C-terminus: Large ribosomal subunit protein uL3 (231 aa).

Glutamine 151 bears the N5-methylglutamine mark.

It belongs to the universal ribosomal protein uL3 family. In terms of assembly, part of the 50S ribosomal subunit. Forms a cluster with proteins L14 and L19. In terms of processing, methylated by PrmB.

Functionally, one of the primary rRNA binding proteins, it binds directly near the 3'-end of the 23S rRNA, where it nucleates assembly of the 50S subunit. The chain is Large ribosomal subunit protein uL3 from Granulibacter bethesdensis (strain ATCC BAA-1260 / CGDNIH1).